The chain runs to 88 residues: Small ribosomal subunit protein uS17 (88 aa).

Belongs to the universal ribosomal protein uS17 family. In terms of assembly, part of the 30S ribosomal subunit.

In terms of biological role, one of the primary rRNA binding proteins, it binds specifically to the 5'-end of 16S ribosomal RNA. This chain is Small ribosomal subunit protein uS17, found in Brevibacillus brevis (strain 47 / JCM 6285 / NBRC 100599).